The sequence spans 159 residues: 6,7-dimethyl-8-ribityllumazine synthase (159 aa).

5-amino-6-(D-ribitylamino)uracil is bound by residues Trp26, 58–60 (SFE), and 80–82 (VVI). Position 85-86 (85-86 (GT)) interacts with (2S)-2-hydroxy-3-oxobutyl phosphate. His88 functions as the Proton donor in the catalytic mechanism. Residue Phe113 coordinates 5-amino-6-(D-ribitylamino)uracil. Residue Arg127 participates in (2S)-2-hydroxy-3-oxobutyl phosphate binding.

The protein belongs to the DMRL synthase family.

The catalysed reaction is (2S)-2-hydroxy-3-oxobutyl phosphate + 5-amino-6-(D-ribitylamino)uracil = 6,7-dimethyl-8-(1-D-ribityl)lumazine + phosphate + 2 H2O + H(+). It functions in the pathway cofactor biosynthesis; riboflavin biosynthesis; riboflavin from 2-hydroxy-3-oxobutyl phosphate and 5-amino-6-(D-ribitylamino)uracil: step 1/2. Its function is as follows. Catalyzes the formation of 6,7-dimethyl-8-ribityllumazine by condensation of 5-amino-6-(D-ribitylamino)uracil with 3,4-dihydroxy-2-butanone 4-phosphate. This is the penultimate step in the biosynthesis of riboflavin. This is 6,7-dimethyl-8-ribityllumazine synthase from Renibacterium salmoninarum (strain ATCC 33209 / DSM 20767 / JCM 11484 / NBRC 15589 / NCIMB 2235).